Consider the following 416-residue polypeptide: Elongation factor 1-gamma 3 (416 aa).

In terms of domain architecture, GST N-terminal spans 1-82 (MALVLHCGSG…YVARLKDNSS (82 aa)). Positions 87–215 (SLIDYSHIEQ…FKQAESVPPV (129 aa)) constitute a GST C-terminal domain. Residues 213–263 (PPVQKKAAPPKESKAKEAKKEAPKEAPKPKVEASEEEEAPKPKPKNPLDLL) are disordered. Residues 221–245 (PPKESKAKEAKKEAPKEAPKPKVEA) show a composition bias toward basic and acidic residues. The 161-residue stretch at 256 to 416 (PKNPLDLLPP…EDLLDAKCFK (161 aa)) folds into the EF-1-gamma C-terminal domain.

As to quaternary structure, EF-1 is composed of four subunits: alpha, beta, delta, and gamma.

In terms of biological role, probably plays a role in anchoring the complex to other cellular components. The chain is Elongation factor 1-gamma 3 from Oryza sativa subsp. japonica (Rice).